The following is a 156-amino-acid chain: Small ribosomal subunit protein uS7 (156 aa).

Belongs to the universal ribosomal protein uS7 family. In terms of assembly, part of the 30S ribosomal subunit. Contacts proteins S9 and S11.

One of the primary rRNA binding proteins, it binds directly to 16S rRNA where it nucleates assembly of the head domain of the 30S subunit. Is located at the subunit interface close to the decoding center, probably blocks exit of the E-site tRNA. This chain is Small ribosomal subunit protein uS7, found in Haemophilus influenzae (strain 86-028NP).